The chain runs to 900 residues: Isoleucine--tRNA ligase (900 aa).

Residues Pro59–His69 carry the 'HIGH' region motif. Glu550 is a binding site for L-isoleucyl-5'-AMP. Positions Lys591–Ser595 match the 'KMSKS' region motif. ATP is bound at residue Lys594. Zn(2+)-binding residues include Cys876, Cys879, Cys892, and Cys895.

The protein belongs to the class-I aminoacyl-tRNA synthetase family. IleS type 1 subfamily. In terms of assembly, monomer. The cofactor is Zn(2+).

The protein localises to the cytoplasm. The enzyme catalyses tRNA(Ile) + L-isoleucine + ATP = L-isoleucyl-tRNA(Ile) + AMP + diphosphate. Functionally, catalyzes the attachment of isoleucine to tRNA(Ile). As IleRS can inadvertently accommodate and process structurally similar amino acids such as valine, to avoid such errors it has two additional distinct tRNA(Ile)-dependent editing activities. One activity is designated as 'pretransfer' editing and involves the hydrolysis of activated Val-AMP. The other activity is designated 'posttransfer' editing and involves deacylation of mischarged Val-tRNA(Ile). This chain is Isoleucine--tRNA ligase, found in Onion yellows phytoplasma (strain OY-M).